Here is a 239-residue protein sequence, read N- to C-terminus: Ribosomal RNA small subunit methyltransferase G (239 aa).

S-adenosyl-L-methionine is bound by residues G78, F83, 129 to 130 (AE), and R148.

This sequence belongs to the methyltransferase superfamily. RNA methyltransferase RsmG family.

The protein localises to the cytoplasm. In terms of biological role, specifically methylates the N7 position of a guanine in 16S rRNA. The protein is Ribosomal RNA small subunit methyltransferase G of Clostridium botulinum (strain Loch Maree / Type A3).